Consider the following 375-residue polypeptide: Chaperone protein DnaJ (375 aa).

The J domain maps to 5 to 70 (DYYEVLGVSR…QKRAAYDQFG (66 aa)). The CR-type zinc finger occupies 131–209 (GTTVKIRVPS…CHGSGYVEEQ (79 aa)). The Zn(2+) site is built by C144, C147, C161, C164, C183, C186, C197, and C200. CXXCXGXG motif repeat units follow at residues 144–151 (CKSCSGSG), 161–168 (CGTCNGAG), 183–190 (CPRCRGAG), and 197–204 (CRSCHGSG).

Belongs to the DnaJ family. As to quaternary structure, homodimer. It depends on Zn(2+) as a cofactor.

It localises to the cytoplasm. Its function is as follows. Participates actively in the response to hyperosmotic and heat shock by preventing the aggregation of stress-denatured proteins and by disaggregating proteins, also in an autonomous, DnaK-independent fashion. Unfolded proteins bind initially to DnaJ; upon interaction with the DnaJ-bound protein, DnaK hydrolyzes its bound ATP, resulting in the formation of a stable complex. GrpE releases ADP from DnaK; ATP binding to DnaK triggers the release of the substrate protein, thus completing the reaction cycle. Several rounds of ATP-dependent interactions between DnaJ, DnaK and GrpE are required for fully efficient folding. Also involved, together with DnaK and GrpE, in the DNA replication of plasmids through activation of initiation proteins. The sequence is that of Chaperone protein DnaJ from Hahella chejuensis (strain KCTC 2396).